Reading from the N-terminus, the 155-residue chain is Ribosome maturation factor RimP (155 aa).

Belongs to the RimP family.

It is found in the cytoplasm. Functionally, required for maturation of 30S ribosomal subunits. In Gloeothece citriformis (strain PCC 7424) (Cyanothece sp. (strain PCC 7424)), this protein is Ribosome maturation factor RimP.